The primary structure comprises 2017 residues: Protein cbp-1 (2017 aa).

A compositionally biased stretch (basic and acidic residues) spans 1 to 13 (MDEPPSKKSRADS). The interval 1 to 182 (MDEPPSKKSR…PGMFQGDQQQ (182 aa)) is disordered. Composition is skewed to low complexity over residues 21–30 (ALSALESLEA) and 78–90 (QPGQ…PPQN). The segment covering 106-116 (NPSQTSNNSPR) has biased composition (polar residues). A compositionally biased stretch (low complexity) spans 141–151 (MMSPPSMGRVP). A compositionally biased stretch (pro residues) spans 152–164 (GPSPGGPQPPGPG). The segment covering 165-182 (QPQMRPGQPGMFQGDQQQ) has biased composition (low complexity). R234 carries the post-translational modification Symmetric dimethylarginine; by PRMT5; in vitro. The tract at residues 307–398 (SNGQPIRGPN…PGSSMLATHQ (92 aa)) is disordered. Residues 340-379 (QAAAAQHAAQQQAAAQAQAQAAAQQQQQQQREQEAAAAAQ) show a composition bias toward low complexity. The TAZ-type 1 zinc-finger motif lies at 399–505 (DPEKRKLIQQ…REDCPVCKPL (107 aa)). 2 disordered regions span residues 558 to 593 (EGFN…DMPD) and 706 to 864 (GRSD…DTVF). Residues 559 to 573 (GFNGNPFQNGPNRGG) are compositionally biased toward low complexity. The KIX domain occupies 593-672 (DCTKEWHHQV…KIYKIQKELQ (80 aa)). Positions 721-773 (PSQQNQPWGGAPNSNMHQQIPPNGQVPQVNNSSTFPSSGNSTPNIGASSTVSA) are enriched in polar residues. Positions 834–854 (KDTKDGVAESKPKEQQAKREP) are enriched in basic and acidic residues. The Bromo domain maps to 864–970 (FSQEDLIKFL…EMFVSEMDPV (107 aa)). 2 interaction with histone regions span residues 902–948 (DYHE…YNRK) and 1224–1226 (YLD). The 381-residue stretch at 1112–1492 (KYLASKLPHN…LAYSLHETDS (381 aa)) folds into the CBP/p300-type HAT domain. Residues 1225–1227 (LDS), 1237–1238 (RT), I1284, R1289, and W1293 each bind acetyl-CoA. The segment covering 1349-1358 (NEEAQRKVKE) has biased composition (basic and acidic residues). Positions 1349-1401 (NEEAQRKVKEDDDDGEDADGGLGGGDSGKKKSSKNKKNNLKKNAKMNKKKAGS) are disordered. Over residues 1378–1399 (KKSSKNKKNNLKKNAKMNKKKA) the composition is skewed to basic residues. The segment at 1494 to 1540 (GMEYTCNKCSSPAVWHCQSCDDFDLCDGCKPTTQHPHEMEKIKSLIG) adopts a ZZ-type zinc-finger fold. 8 residues coordinate Zn(2+): C1499, C1502, C1510, C1513, C1519, C1522, H1528, and H1530. The TAZ-type 2 zinc finger occupies 1550 to 1631 (GGTRYESIQR…ACTVPFCMNI (82 aa)). Disordered regions lie at residues 1656-1828 (GLQS…QPVR) and 1908-2017 (SQMS…AGGQ). Over residues 1667–1678 (TPSTVSNGTPSN) the composition is skewed to polar residues. Residues 1699–1708 (QVQMQQHQGS) are compositionally biased toward low complexity. The span at 1748–1757 (PQMNANQSRY) shows a compositional bias: polar residues. 2 stretches are compositionally biased toward low complexity: residues 1793 to 1812 (MNPQ…QNPG) and 1908 to 1932 (SQMS…QAGA). The span at 1943-1962 (QNNSQPRAPSGQFASMNPSM) shows a compositional bias: polar residues. The segment covering 1963 to 2017 (QQQYPQQQQGWPQQRQQNPGGMQQNANPYNQFQNRQNMMMMPQQQQPHPSNAGGQ) has biased composition (low complexity).

Interacts (via N-terminus domain and HAT domain) with prmt-5; the interaction results in methylation of cbp-1. Interacts (via HAT domain) with cep-1; cep-1 transcriptional activity may be inhibited by interaction with methylated cbp-1. Component of a complex that contains prmt-5 and cbp-1. In terms of processing, methylation by prmt-5 may repress the capacity of cbp-1 to enhance cep-1-dependent transcription of egl-1.

It is found in the nucleus. It carries out the reaction L-lysyl-[protein] + acetyl-CoA = N(6)-acetyl-L-lysyl-[protein] + CoA + H(+). Functionally, acetyltransferase enzyme. Acetylates histones, giving a specific tag for transcriptional activation. May prevent DNA damage-induced apoptosis by inhibiting cep-1-dependent transcription activation of the programmed cell death activator egl-1. In differentiated cells, negatively regulates localization of heterochromatin to the nuclear periphery. Plays a role in migration of gonadal distal tip cells, where it probably modulates expression of genes involved in integrin-mediated adhesion. The sequence is that of Protein cbp-1 (cbp-1) from Caenorhabditis elegans.